Consider the following 574-residue polypeptide: Sulfate adenylyltransferase (574 aa).

The segment at 1–170 is N-terminal; it reads MANTPHGGVL…LEAINRLEHY (170 aa). Residues 171-395 form a catalytic region; it reads DFLDLRFTPS…LREENPLPAE (225 aa). Gln-198 provides a ligand contact to sulfate. ATP-binding positions include 198–201 and 292–295; these read QTRN and GRDH. Catalysis depends on residues Thr-199, Arg-200, and Asn-201. Arg-200 contacts sulfate. Residue Ala-296 coordinates sulfate. Met-334 provides a ligand contact to ATP. Residues 396-574 are allosteric regulation domain; adenylyl-sulfate kinase-like; sequence KGFTVFMTGY…LESNGLLDRL (179 aa). Residues 435–438, Arg-452, 478–479, and Lys-516 each bind 3'-phosphoadenylyl sulfate; these read ENVR and IA.

This sequence in the N-terminal section; belongs to the sulfate adenylyltransferase family. The protein in the C-terminal section; belongs to the APS kinase family. Homohexamer. Dimer of trimers.

Its subcellular location is the cytoplasm. It carries out the reaction sulfate + ATP + H(+) = adenosine 5'-phosphosulfate + diphosphate. The protein operates within sulfur metabolism; hydrogen sulfide biosynthesis; sulfite from sulfate: step 1/3. Its activity is regulated as follows. Allosterically inhibited by 3'-phosphoadenosine 5'-phosphosulfate (PAPS). Functionally, catalyzes the first intracellular reaction of sulfate assimilation, forming adenosine-5'-phosphosulfate (APS) from inorganic sulfate and ATP. Plays an important role in sulfate activation as a component of the biosynthesis pathway of sulfur-containing amino acids. This chain is Sulfate adenylyltransferase, found in Gibberella zeae (strain ATCC MYA-4620 / CBS 123657 / FGSC 9075 / NRRL 31084 / PH-1) (Wheat head blight fungus).